The primary structure comprises 567 residues: Urease subunit alpha (567 aa).

One can recognise a Urease domain in the interval 129 to 567 (GGIDAHIHFI…LPMAQRYFLF (439 aa)). 3 residues coordinate Ni(2+): histidine 134, histidine 136, and lysine 217. Residue lysine 217 is modified to N6-carboxylysine. Position 219 (histidine 219) interacts with substrate. Positions 246 and 272 each coordinate Ni(2+). The active-site Proton donor is the histidine 320. Ni(2+) is bound at residue aspartate 360.

This sequence belongs to the metallo-dependent hydrolases superfamily. Urease alpha subunit family. In terms of assembly, heterotrimer of UreA (gamma), UreB (beta) and UreC (alpha) subunits. Three heterotrimers associate to form the active enzyme. Ni cation is required as a cofactor. Post-translationally, carboxylation allows a single lysine to coordinate two nickel ions.

It localises to the cytoplasm. The enzyme catalyses urea + 2 H2O + H(+) = hydrogencarbonate + 2 NH4(+). It functions in the pathway nitrogen metabolism; urea degradation; CO(2) and NH(3) from urea (urease route): step 1/1. The chain is Urease subunit alpha from Teredinibacter turnerae (strain ATCC 39867 / T7901).